Consider the following 428-residue polypeptide: UDP-N-acetylglucosamine 1-carboxyvinyltransferase (428 aa).

25–26 lines the phosphoenolpyruvate pocket; the sequence is KN. Arg102 contributes to the UDP-N-acetyl-alpha-D-glucosamine binding site. The active-site Proton donor is Cys126. A 2-(S-cysteinyl)pyruvic acid O-phosphothioketal modification is found at Cys126. UDP-N-acetyl-alpha-D-glucosamine is bound by residues Asp316 and Val338.

This sequence belongs to the EPSP synthase family. MurA subfamily.

The protein localises to the cytoplasm. It catalyses the reaction phosphoenolpyruvate + UDP-N-acetyl-alpha-D-glucosamine = UDP-N-acetyl-3-O-(1-carboxyvinyl)-alpha-D-glucosamine + phosphate. Its pathway is cell wall biogenesis; peptidoglycan biosynthesis. In terms of biological role, cell wall formation. Adds enolpyruvyl to UDP-N-acetylglucosamine. This is UDP-N-acetylglucosamine 1-carboxyvinyltransferase from Anaplasma marginale (strain Florida).